We begin with the raw amino-acid sequence, 619 residues long: Eukaryotic translation initiation factor 3 subunit D (619 aa).

Residues 99-160 (QKQPHQRGRF…KWGARPPPKI (62 aa)) form a disordered region. Basic residues predominate over residues 100–121 (KQPHQRGRFRGNLRNQRGRGRG). The RNA gate stretch occupies residues 288–302 (EFDLLTVNETAIEPP). The interval 588 to 619 (TPAATETVATATTEATTPTTATKTTAPAAAQK) is disordered.

The protein belongs to the eIF-3 subunit D family. As to quaternary structure, component of the eukaryotic translation initiation factor 3 (eIF-3) complex.

The protein localises to the cytoplasm. Functionally, mRNA cap-binding component of the eukaryotic translation initiation factor 3 (eIF-3) complex, which is involved in protein synthesis of a specialized repertoire of mRNAs and, together with other initiation factors, stimulates binding of mRNA and methionyl-tRNAi to the 40S ribosome. The eIF-3 complex specifically targets and initiates translation of a subset of mRNAs involved in cell proliferation. In the eIF-3 complex, eif3d specifically recognizes and binds the 7-methylguanosine cap of a subset of mRNAs. In Aedes aegypti (Yellowfever mosquito), this protein is Eukaryotic translation initiation factor 3 subunit D.